We begin with the raw amino-acid sequence, 318 residues long: Pyrimidine-specific ribonucleoside hydrolase RihA (318 aa).

Residue His240 is part of the active site.

This sequence belongs to the IUNH family. RihA subfamily.

Functionally, hydrolyzes cytidine or uridine to ribose and cytosine or uracil, respectively. The chain is Pyrimidine-specific ribonucleoside hydrolase RihA from Shewanella baltica (strain OS155 / ATCC BAA-1091).